The primary structure comprises 164 residues: Dihydrofolate reductase (164 aa).

The 161-residue stretch at 2-162 (NISIIVAMSQ…FYVTFKILKK (161 aa)) folds into the DHFR domain. Position 6–8 (6–8 (IVA)) interacts with substrate. Residues 7–8 (VA) and 15–20 (IGQKNS) each bind NADP(+). Residue Asp28 coordinates substrate. An NADP(+)-binding site is contributed by 44–47 (GRKT). A substrate-binding site is contributed by Arg58. Residues 63–66 (LTRQ) and 96–101 (IGGSNL) contribute to the NADP(+) site. Residue Thr115 coordinates substrate.

Belongs to the dihydrofolate reductase family.

The catalysed reaction is (6S)-5,6,7,8-tetrahydrofolate + NADP(+) = 7,8-dihydrofolate + NADPH + H(+). The protein operates within cofactor biosynthesis; tetrahydrofolate biosynthesis; 5,6,7,8-tetrahydrofolate from 7,8-dihydrofolate: step 1/1. Its function is as follows. Key enzyme in folate metabolism. Catalyzes an essential reaction for de novo glycine and purine synthesis, and for DNA precursor synthesis. The protein is Dihydrofolate reductase (folA) of Buchnera aphidicola subsp. Baizongia pistaciae (strain Bp).